Reading from the N-terminus, the 311-residue chain is Insulin-like growth factor-binding protein 2 (311 aa).

The first 36 residues, 1 to 36 (MALGGVGRGGAARAAWPRLLLAALAPALALAGPALP), serve as a signal peptide directing secretion. The IGFBP N-terminal domain maps to 38–120 (VLFRCPPCTA…VQGQGTCARP (83 aa)). Intrachain disulfides connect cysteine 42–cysteine 70, cysteine 45–cysteine 72, cysteine 53–cysteine 73, cysteine 61–cysteine 76, cysteine 84–cysteine 97, and cysteine 91–cysteine 117. Disordered regions lie at residues 112-168 (QGQG…PLKT) and 188-210 (GKVGKAHHNHEDSKKSRMPTGRT). Residues 209-291 (RTPCQQELDQ…APTIRGDPEC (83 aa)) enclose the Thyroglobulin type-1 domain. 3 disulfides stabilise this stretch: cysteine 212–cysteine 246, cysteine 257–cysteine 268, and cysteine 270–cysteine 291. The short motif at 286–288 (RGD) is the Cell attachment site element.

As to quaternary structure, binds IGF2 more than IGF1.

It localises to the secreted. Inhibits IGF-mediated growth and developmental rates. IGF-binding proteins prolong the half-life of the IGFs and have been shown to either inhibit or stimulate the growth promoting effects of the IGFs on cell culture. They alter the interaction of IGFs with their cell surface receptors. The protein is Insulin-like growth factor-binding protein 2 (IGFBP2) of Gallus gallus (Chicken).